A 396-amino-acid polypeptide reads, in one-letter code: S-adenosylmethionine synthase 4 (396 aa).

Residue Glu-13 coordinates Mg(2+). His-19 contributes to the ATP binding site. Glu-47 provides a ligand contact to K(+). Positions 60 and 103 each coordinate L-methionine. ATP contacts are provided by residues 171-173, 239-242, Asp-250, 256-257, Ala-273, Lys-277, and Lys-281; these read DGK, SGRF, and RK. L-methionine is bound at residue Asp-250. Lys-281 contacts L-methionine.

The protein belongs to the AdoMet synthase family. As to quaternary structure, homotetramer. Requires Mn(2+) as cofactor. The cofactor is Mg(2+). It depends on Co(2+) as a cofactor. K(+) serves as cofactor. Expressed in roots, stems and leaves (at protein level).

Its subcellular location is the cytoplasm. It carries out the reaction L-methionine + ATP + H2O = S-adenosyl-L-methionine + phosphate + diphosphate. It functions in the pathway amino-acid biosynthesis; S-adenosyl-L-methionine biosynthesis; S-adenosyl-L-methionine from L-methionine: step 1/1. Functionally, catalyzes the formation of S-adenosylmethionine from methionine and ATP. The reaction comprises two steps that are both catalyzed by the same enzyme: formation of S-adenosylmethionine (AdoMet) and triphosphate, and subsequent hydrolysis of the triphosphate. May be involved in the synthesis of betain in response to abiotic stress such as high salinity. This is S-adenosylmethionine synthase 4 (SAMS4) from Atriplex nummularia (Old man saltbush).